A 72-amino-acid chain; its full sequence is DNA-directed RNA polymerase subunit omega (72 aa).

This sequence belongs to the RNA polymerase subunit omega family. In terms of assembly, the RNAP catalytic core consists of 2 alpha, 1 beta, 1 beta' and 1 omega subunit. When a sigma factor is associated with the core the holoenzyme is formed, which can initiate transcription.

The catalysed reaction is RNA(n) + a ribonucleoside 5'-triphosphate = RNA(n+1) + diphosphate. Its function is as follows. Promotes RNA polymerase assembly. Latches the N- and C-terminal regions of the beta' subunit thereby facilitating its interaction with the beta and alpha subunits. This Clostridium botulinum (strain Langeland / NCTC 10281 / Type F) protein is DNA-directed RNA polymerase subunit omega.